The sequence spans 150 residues: 3-hydroxyacyl-[acyl-carrier-protein] dehydratase FabZ (150 aa).

H47 is an active-site residue.

This sequence belongs to the thioester dehydratase family. FabZ subfamily.

It localises to the cytoplasm. It catalyses the reaction a (3R)-hydroxyacyl-[ACP] = a (2E)-enoyl-[ACP] + H2O. In terms of biological role, involved in unsaturated fatty acids biosynthesis. Catalyzes the dehydration of short chain beta-hydroxyacyl-ACPs and long chain saturated and unsaturated beta-hydroxyacyl-ACPs. The sequence is that of 3-hydroxyacyl-[acyl-carrier-protein] dehydratase FabZ from Verminephrobacter eiseniae (strain EF01-2).